The chain runs to 267 residues: Glucosamine-6-phosphate deaminase (267 aa).

D72 acts as the Proton acceptor; for enolization step in catalysis. The active-site For ring-opening step is the D141. The active-site Proton acceptor; for ring-opening step is the H143. E148 acts as the For ring-opening step in catalysis.

The protein belongs to the glucosamine/galactosamine-6-phosphate isomerase family. NagB subfamily. Homohexamer.

It carries out the reaction alpha-D-glucosamine 6-phosphate + H2O = beta-D-fructose 6-phosphate + NH4(+). The protein operates within amino-sugar metabolism; N-acetylneuraminate degradation; D-fructose 6-phosphate from N-acetylneuraminate: step 5/5. Allosterically activated by N-acetylglucosamine 6-phosphate (GlcNAc6P). In terms of biological role, catalyzes the reversible isomerization-deamination of glucosamine 6-phosphate (GlcN6P) to form fructose 6-phosphate (Fru6P) and ammonium ion. The sequence is that of Glucosamine-6-phosphate deaminase from Pasteurella multocida (strain Pm70).